The sequence spans 321 residues: Large ribosomal subunit protein uL3 (321 aa).

It belongs to the universal ribosomal protein uL3 family. Part of the 50S ribosomal subunit. Forms a cluster with proteins L14 and L24e.

One of the primary rRNA binding proteins, it binds directly near the 3'-end of the 23S rRNA, where it nucleates assembly of the 50S subunit. In Nanoarchaeum equitans (strain Kin4-M), this protein is Large ribosomal subunit protein uL3.